A 59-amino-acid chain; its full sequence is UPF0434 protein HEAR2489 (59 aa).

The protein belongs to the UPF0434 family.

The chain is UPF0434 protein HEAR2489 from Herminiimonas arsenicoxydans.